The following is a 171-amino-acid chain: Adenine phosphoribosyltransferase (171 aa).

The protein belongs to the purine/pyrimidine phosphoribosyltransferase family. Homodimer.

The protein resides in the cytoplasm. It carries out the reaction AMP + diphosphate = 5-phospho-alpha-D-ribose 1-diphosphate + adenine. Its pathway is purine metabolism; AMP biosynthesis via salvage pathway; AMP from adenine: step 1/1. Functionally, catalyzes a salvage reaction resulting in the formation of AMP, that is energically less costly than de novo synthesis. This is Adenine phosphoribosyltransferase from Geotalea uraniireducens (strain Rf4) (Geobacter uraniireducens).